The following is a 755-amino-acid chain: Large structural phosphoprotein (755 aa).

2 disordered regions span residues 312–333 (ESSS…IKTE) and 522–555 (QSFD…STKT). Residues 535–555 (PQDQKSIKQKNGNKANSSTKT) show a composition bias toward polar residues.

The protein belongs to the herpesviridae large structural phosphoprotein family. In terms of processing, phosphorylated at multiple sites.

Its subcellular location is the virion tegument. The sequence is that of Large structural phosphoprotein (U11) from Homo sapiens (Human).